Here is a 223-residue protein sequence, read N- to C-terminus: MVDNKQDVVAEFKLVLVGDGGVGKTTFVTRHQTGEFEKRYIATQGVNVSNMILHTTKGAIRFNIWDTAGQEKLGGLREGYYIGADAAIMMFDVTSRITYKNIPKWHKDLTRICENVPIVLVGNKVDSKDSKVKARQITFHRKRSLQYYDVSAKSNYQYEKPFLWILRKLTGDPNLNLVEGIALAPVDIHMTEDQIKQLQMEHDEAMNLAQQGQLPDEEDDEFN.

In terms of domain architecture, Small GTPase Ran-type spans 8 to 172 (VVAEFKLVLV…LWILRKLTGD (165 aa)). 19-26 (DGGVGKTT) lines the GTP pocket. The segment at 38–46 (KRYIATQGV) is switch-I. GTP contacts are provided by residues Gly-69, 123-126 (NKVD), and 151-153 (SAK). The tract at residues 69–85 (GQEKLGGLREGYYIGAD) is switch-II.

This sequence belongs to the small GTPase superfamily. Ran family. Monomer. Found in a nuclear export complex with RanGTP, exportin and pre-miRNA.

Its subcellular location is the nucleus. GTP-binding protein involved in nucleocytoplasmic transport. Required for the import of protein into the nucleus and also for RNA export. Involved in chromatin condensation and control of cell cycle. This chain is GTP-binding nuclear protein Ran, found in Tetrahymena pyriformis.